The following is a 74-amino-acid chain: RNA-binding protein Hfq (74 aa).

A Sm domain is found at 9–69 (DQFLNQLRKE…ISTFMPQKNV (61 aa)).

The protein belongs to the Hfq family. In terms of assembly, homohexamer.

In terms of biological role, RNA chaperone that binds small regulatory RNA (sRNAs) and mRNAs to facilitate mRNA translational regulation in response to envelope stress, environmental stress and changes in metabolite concentrations. Also binds with high specificity to tRNAs. In Bacillus cytotoxicus (strain DSM 22905 / CIP 110041 / 391-98 / NVH 391-98), this protein is RNA-binding protein Hfq.